The sequence spans 228 residues: Mitochondrial assembly of ribosomal large subunit protein 1 (228 aa).

Residues 53–77 (SLTRGLHHGPQPEERTAGDARLQPG) form a disordered region.

This sequence belongs to the Iojap/RsfS family. As to quaternary structure, associates with the mitochondrial ribosome large subunit (39S) via interaction with MRPL12 and/or MRPL14. The interaction generates steric hindrance that is expected to prevent premature association of the 28S and 39S ribosomal subunits. Identified in a complex composed of MALSU1, MIEF1 upstream open reading frame protein and NDUFAB1; within the trimeric complex, MIEF1 upstream open reading frame protein functions as a bridging scaffold that interacts with MALSU1 on one side, and with NDUFAB1 on the other side. Interacts with MRPL12 and MRPL14.

It is found in the mitochondrion matrix. Its function is as follows. Required for normal mitochondrial ribosome function and mitochondrial translation. May play a role in ribosome biogenesis by preventing premature association of the 28S and 39S ribosomal subunits. Interacts with mitochondrial ribosomal protein uL14m (MRPL14), probably blocking formation of intersubunit bridge B8, preventing association of the 28S and 39S ribosomal subunits. Addition to isolated mitochondrial ribosomal subunits partially inhibits translation, probably by interfering with the association of the 28S and 39S ribosomal subunits and the formation of functional ribosomes. May also participate in the assembly and/or regulation of the stability of the large subunit of the mitochondrial ribosome. May function as a ribosomal silencing factor. The polypeptide is Mitochondrial assembly of ribosomal large subunit protein 1 (Malsu1) (Mus musculus (Mouse)).